The following is a 296-amino-acid chain: Class E basic helix-loop-helix protein 22 (296 aa).

The tract at residues serine 26 to alanine 70 is disordered. Positions threonine 153 to glutamine 207 constitute a bHLH domain.

Its subcellular location is the nucleus. Functionally, may act as a transcriptional repressor. The protein is Class E basic helix-loop-helix protein 22 (bhlhe22) of Xenopus tropicalis (Western clawed frog).